We begin with the raw amino-acid sequence, 512 residues long: 2,3-bisphosphoglycerate-independent phosphoglycerate mutase (512 aa).

Mn(2+) contacts are provided by Asp12 and Ser62. Ser62 (phosphoserine intermediate) is an active-site residue. Substrate contacts are provided by residues His123, 153-154, Arg185, Arg191, 260-263, and Lys333; these read RD and RPDR. Asp400, His404, Asp441, His442, and His460 together coordinate Mn(2+).

Belongs to the BPG-independent phosphoglycerate mutase family. In terms of assembly, monomer. Mn(2+) is required as a cofactor.

It carries out the reaction (2R)-2-phosphoglycerate = (2R)-3-phosphoglycerate. It participates in carbohydrate degradation; glycolysis; pyruvate from D-glyceraldehyde 3-phosphate: step 3/5. Functionally, catalyzes the interconversion of 2-phosphoglycerate and 3-phosphoglycerate. This is 2,3-bisphosphoglycerate-independent phosphoglycerate mutase from Clostridium perfringens (strain 13 / Type A).